The primary structure comprises 999 residues: Bifunctional glutamine synthetase adenylyltransferase/adenylyl-removing enzyme (999 aa).

An adenylyl removase region spans residues 1-493; sequence MFVRKPATER…LHAKLFYQPL (493 aa). The interval 498–999 is adenylyl transferase; it reads GHTALGIGEG…KAVVRKIFGG (502 aa).

Belongs to the GlnE family. The cofactor is Mg(2+).

The catalysed reaction is [glutamine synthetase]-O(4)-(5'-adenylyl)-L-tyrosine + phosphate = [glutamine synthetase]-L-tyrosine + ADP. It carries out the reaction [glutamine synthetase]-L-tyrosine + ATP = [glutamine synthetase]-O(4)-(5'-adenylyl)-L-tyrosine + diphosphate. In terms of biological role, involved in the regulation of glutamine synthetase GlnA, a key enzyme in the process to assimilate ammonia. When cellular nitrogen levels are high, the C-terminal adenylyl transferase (AT) inactivates GlnA by covalent transfer of an adenylyl group from ATP to specific tyrosine residue of GlnA, thus reducing its activity. Conversely, when nitrogen levels are low, the N-terminal adenylyl removase (AR) activates GlnA by removing the adenylyl group by phosphorolysis, increasing its activity. The regulatory region of GlnE binds the signal transduction protein PII (GlnB) which indicates the nitrogen status of the cell. The polypeptide is Bifunctional glutamine synthetase adenylyltransferase/adenylyl-removing enzyme (Mycolicibacterium smegmatis (strain ATCC 700084 / mc(2)155) (Mycobacterium smegmatis)).